A 244-amino-acid polypeptide reads, in one-letter code: ATP synthase subunit a (244 aa).

6 helical membrane passes run 17–37 (LTNI…AILT), 75–95 (FLAL…LGLP), 112–132 (DPAI…YYGV), 164–184 (LTLG…LGLL), 196–216 (FFLG…WQAF), and 217–237 (SLFI…VYMS).

The protein belongs to the ATPase A chain family. F-type ATPases have 2 components, CF(1) - the catalytic core - and CF(0) - the membrane proton channel. CF(1) has five subunits: alpha(3), beta(3), gamma(1), delta(1), epsilon(1). CF(0) has three main subunits: a(1), b(2) and c(9-12). The alpha and beta chains form an alternating ring which encloses part of the gamma chain. CF(1) is attached to CF(0) by a central stalk formed by the gamma and epsilon chains, while a peripheral stalk is formed by the delta and b chains.

It localises to the cell membrane. Its function is as follows. Key component of the proton channel; it plays a direct role in the translocation of protons across the membrane. The chain is ATP synthase subunit a from Bacillus velezensis (strain DSM 23117 / BGSC 10A6 / LMG 26770 / FZB42) (Bacillus amyloliquefaciens subsp. plantarum).